The following is a 3498-amino-acid chain: Mediator of RNA polymerase II transcription subunit 12 (3498 aa).

6 disordered regions span residues 365-456 (IKQH…HTDI), 497-764 (GGVG…EPEK), 2209-2576 (AKKR…AYMK), 2589-2620 (ENNR…EAYA), 2637-2889 (LRKE…KEKQ), and 2917-3498 (NVAG…PNQY). Residues 368 to 394 (HEKRKAGSLKKSERRRRRGLSKNRPKK) are compositionally biased toward basic residues. Over residues 404–416 (SLDHDKVQIKQEP) the composition is skewed to basic and acidic residues. Polar residues-rich tracts occupy residues 424-440 (GQQS…SHQY) and 512-536 (SNPT…SASP). Residues 539–570 (SVDKENECEKKEDESKTKEKNKDKEKDKEKEK) adopt a coiled-coil conformation. Basic and acidic residues-rich tracts occupy residues 540-578 (VDKE…HTND) and 593-614 (ANDK…TGKE). Low complexity predominate over residues 621 to 630 (SKTAKTSTSA). Basic and acidic residues-rich tracts occupy residues 691–719 (EVDK…KKAD), 738–764 (ESEK…EPEK), and 2209–2285 (AKKR…KRAS). The required for nuclear localization stretch occupies residues 2142 to 3498 (QTTRLDKVAK…YPNQQPPNQY (1357 aa)). The stretch at 2203-2290 (VIDEEEAKKR…EKRASDAAAA (88 aa)) forms a coiled coil. Composition is skewed to low complexity over residues 2342–2360 (RADT…APIA) and 2409–2431 (LADA…SSMP). Residues 2395–2420 (RNLLNRKKEEKRNSLADASAAAAAAN) adopt a coiled-coil conformation. Polar residues predominate over residues 2444–2456 (QSAGATQQLQGMQ). Low complexity predominate over residues 2459–2479 (QMGGSMSGMNQNMGGMNQSMS). Positions 2514–2530 (NRSSGPVSSETRQQIME) are enriched in polar residues. Composition is skewed to basic and acidic residues over residues 2547 to 2576 (QKQR…AYMK), 2589 to 2616 (ENNR…RAAE), and 2637 to 2724 (LRKE…EQQR). The segment covering 2725 to 2770 (RSQQNPYMNQQGQYSQQPPPSYQQSSYPNNYQPGQQGNQPPNYQQP) has biased composition (low complexity). Over residues 2771 to 2783 (SHQSMQQGHQAGY) the composition is skewed to polar residues. Residues 2784–2810 (QQTSNQMQMNMQQQQNRQQGGPQQSFS) show a composition bias toward low complexity. Composition is skewed to polar residues over residues 2816–2827 (NQPSQPGYSGYN), 2842–2852 (RNPFGNQQDMQ), 2868–2881 (HAQQ…QLSL), and 2926–2956 (GQQQ…SSNP). A compositionally biased stretch (low complexity) spans 2957–2993 (QGGMQSYQQQQPVLGQPGPIQTGQSTQQQIPAQSQQQ). A compositionally biased stretch (polar residues) spans 2994-3009 (YNSGRPQMHTTPTKND). Residues 3039-3100 (GQNVPGGYQQ…NVSQSQSAAQ (62 aa)) show a composition bias toward low complexity. The span at 3103–3127 (RPSQDSAYQQSGYNQTGNQSYQRPD) shows a compositional bias: polar residues. Low complexity-rich tracts occupy residues 3128–3184 (QQQQ…SAQY) and 3192–3223 (QGYD…QTQQ). Positions 3231–3253 (SGYTANSGGSSNILNQSMEESGL) are enriched in polar residues. Residues 3254 to 3311 (NQGFSGASSNASSQQGGSSQMQQSGYGMPGNQMQMQQNQKQQVQRGMPTGMGQTNMGQ) show a composition bias toward low complexity. Residues 3312–3321 (SGMGQSGMGQ) show a composition bias toward gly residues. 2 stretches are compositionally biased toward low complexity: residues 3336 to 3356 (QGQQ…NQRG) and 3370 to 3408 (QQQH…QGQQ). A compositionally biased stretch (polar residues) spans 3414–3425 (PSQQQSGAAYSN). The span at 3426-3436 (QMQFQGVRQGQ) shows a compositional bias: low complexity. Gly residues predominate over residues 3437 to 3446 (QGMGGMGGSG). A compositionally biased stretch (low complexity) spans 3447-3498 (QQQPQTQPHGSNQYYQQQQDQRMQQQPQQPGQQQQHGYGMGQYPNQQPPNQY).

Belongs to the Mediator complex subunit 12 family. In terms of assembly, component of the Mediator complex. As to expression, ubiquitously expressed.

The protein resides in the nucleus. Component of the Mediator complex, a coactivator involved in regulated gene transcription of nearly all RNA polymerase II-dependent genes. Mediator functions as a bridge to convey information from gene-specific regulatory proteins to the basal RNA polymerase II transcription machinery. Mediator is recruited to promoters by direct interactions with regulatory proteins and serves as a scaffold for the assembly of a functional preinitiation complex with RNA polymerase II and the general transcription factors. Functions downstream of let-60 during vulval induction. Required for asymmetric division of T-cells and for hypodermal development. The polypeptide is Mediator of RNA polymerase II transcription subunit 12 (dpy-22) (Caenorhabditis elegans).